The following is a 533-amino-acid chain: E3 ubiquitin-protein ligase arih1l (533 aa).

2 disordered regions span residues 1–35 (MDSDEGYNYEFDDEEEEEEEEEECSVDSGEEEAVD) and 48–73 (PAVAGGEPDDCADTGGGGPGPGQEDE). The tract at residues 158–369 (QDLPCQICYL…SAWYNCNRYN (212 aa)) is TRIAD supradomain. C162, C165, C179, H181, C184, C187, C207, C212, C252, C257, C273, C275, C280, C283, H288, C293, C320, and C323 together coordinate Zn(2+). The RING-type 1 zinc-finger motif lies at 162 to 212 (CQICYLNYPNSYFTGLECGHKFCMQCWGDYLTTKIIEEGMGQTISCPAHNC). The IBR-type zinc finger occupies 232–293 (LKYQHLITNS…GENWHDPVKC (62 aa)). An RING-type 2; atypical zinc finger spans residues 320-351 (CPKCHVTIEKDGGCNHMVCRNQNCKAEFCWVC). C333 is an active-site residue. Zn(2+)-binding residues include C338, C343, C348, C351, H358, and C365. A coiled-coil region spans residues 409-425 (KLYAQVKQKMEEMQQHN).

The protein belongs to the RBR family. Ariadne subfamily.

The protein resides in the cytoplasm. It carries out the reaction [E2 ubiquitin-conjugating enzyme]-S-ubiquitinyl-L-cysteine + [acceptor protein]-L-lysine = [E2 ubiquitin-conjugating enzyme]-L-cysteine + [acceptor protein]-N(6)-ubiquitinyl-L-lysine.. The protein operates within protein modification; protein ubiquitination. Functionally, E3 ubiquitin-protein ligase, which catalyzes polyubiquitination of target proteins together with ubiquitin-conjugating enzyme E2 ube2l3. This is E3 ubiquitin-protein ligase arih1l (arih1l) from Danio rerio (Zebrafish).